The following is a 500-amino-acid chain: Beta-xylosidase (500 aa).

Glu160 functions as the Proton donor in the catalytic mechanism. Residue Glu277 is the Nucleophile of the active site.

This sequence belongs to the glycosyl hydrolase 39 family.

The catalysed reaction is Hydrolysis of (1-&gt;4)-beta-D-xylans, to remove successive D-xylose residues from the non-reducing termini.. This is Beta-xylosidase (xynB) from Thermoanaerobacterium saccharolyticum (strain DSM 8691 / JW/SL-YS485).